A 291-amino-acid polypeptide reads, in one-letter code: Protease HtpX (291 aa).

The next 2 membrane-spanning stretches (helical) occupy residues 4–24 and 36–56; these read IALF…VLNI and LSGL…VSLL. His143 contributes to the Zn(2+) binding site. Glu144 is an active-site residue. His147 contacts Zn(2+). 2 consecutive transmembrane segments (helical) span residues 151–171 and 199–219; these read GDMI…IFLS and FIVS…LTMW. Glu225 provides a ligand contact to Zn(2+).

Belongs to the peptidase M48B family. Requires Zn(2+) as cofactor.

The protein localises to the cell inner membrane. The sequence is that of Protease HtpX from Aliivibrio salmonicida (strain LFI1238) (Vibrio salmonicida (strain LFI1238)).